We begin with the raw amino-acid sequence, 138 residues long: Holo-[acyl-carrier-protein] synthase (138 aa).

Residues D11 and E65 each coordinate Mg(2+).

This sequence belongs to the P-Pant transferase superfamily. AcpS family. Mg(2+) serves as cofactor.

The protein resides in the cytoplasm. The enzyme catalyses apo-[ACP] + CoA = holo-[ACP] + adenosine 3',5'-bisphosphate + H(+). In terms of biological role, transfers the 4'-phosphopantetheine moiety from coenzyme A to a Ser of acyl-carrier-protein. This is Holo-[acyl-carrier-protein] synthase from Ralstonia nicotianae (strain ATCC BAA-1114 / GMI1000) (Ralstonia solanacearum).